The sequence spans 857 residues: DNA mismatch repair protein MutS (857 aa).

613 to 620 (GPNMGGKS) is an ATP binding site. Residues 797–820 (TSLPHEQPAAHKAKDAPQVPHQSD) form a disordered region.

It belongs to the DNA mismatch repair MutS family.

Functionally, this protein is involved in the repair of mismatches in DNA. It is possible that it carries out the mismatch recognition step. This protein has a weak ATPase activity. The sequence is that of DNA mismatch repair protein MutS from Pseudomonas putida (strain ATCC 700007 / DSM 6899 / JCM 31910 / BCRC 17059 / LMG 24140 / F1).